Consider the following 1167-residue polypeptide: Carbamoyl phosphate synthase large chain (1167 aa).

The carboxyphosphate synthetic domain stretch occupies residues 1–455; that stretch reads MPRRTDIKSI…SLQKALRGLE (455 aa). Residues Arg129, Arg221, Gly227, Gly228, Glu260, Val262, Glu267, Gly293, Val294, His295, Gln337, and Glu351 each coordinate ATP. Residues 184 to 380 enclose the ATP-grasp 1 domain; the sequence is LETRWNLGEG…IAKIAAKLAV (197 aa). Mg(2+)-binding residues include Gln337, Glu351, and Asn353. Gln337, Glu351, and Asn353 together coordinate Mn(2+). An oligomerization domain region spans residues 456–619; that stretch reads TGLTGLDEIE…PFAGALANEA (164 aa). The tract at residues 620–1031 is carbamoyl phosphate synthetic domain; it reads QVSSRKKVVI…AFAKSQLGAG (412 aa). The 213-residue stretch at 748–960 folds into the ATP-grasp 2 domain; sequence QKLLHKLGLS…IAKIAARIMA (213 aa). Residues Arg784, Thr844, Leu846, Glu851, Gly876, Ile877, His878, Ser879, Gln919, and Glu931 each coordinate ATP. Gln919, Glu931, and Asn933 together coordinate Mg(2+). Mn(2+)-binding residues include Gln919, Glu931, and Asn933. In terms of domain architecture, MGS-like spans 1032 to 1167; sequence VDLPRSGTLF…EVRPLQEYFA (136 aa). An allosteric domain region spans residues 1032-1167; sequence VDLPRSGTLF…EVRPLQEYFA (136 aa).

This sequence belongs to the CarB family. In terms of assembly, composed of two chains; the small (or glutamine) chain promotes the hydrolysis of glutamine to ammonia, which is used by the large (or ammonia) chain to synthesize carbamoyl phosphate. Tetramer of heterodimers (alpha,beta)4. The cofactor is Mg(2+). Mn(2+) is required as a cofactor.

The catalysed reaction is hydrogencarbonate + L-glutamine + 2 ATP + H2O = carbamoyl phosphate + L-glutamate + 2 ADP + phosphate + 2 H(+). The enzyme catalyses hydrogencarbonate + NH4(+) + 2 ATP = carbamoyl phosphate + 2 ADP + phosphate + 2 H(+). The protein operates within amino-acid biosynthesis; L-arginine biosynthesis; carbamoyl phosphate from bicarbonate: step 1/1. Its pathway is pyrimidine metabolism; UMP biosynthesis via de novo pathway; (S)-dihydroorotate from bicarbonate: step 1/3. Large subunit of the glutamine-dependent carbamoyl phosphate synthetase (CPSase). CPSase catalyzes the formation of carbamoyl phosphate from the ammonia moiety of glutamine, carbonate, and phosphate donated by ATP, constituting the first step of 2 biosynthetic pathways, one leading to arginine and/or urea and the other to pyrimidine nucleotides. The large subunit (synthetase) binds the substrates ammonia (free or transferred from glutamine from the small subunit), hydrogencarbonate and ATP and carries out an ATP-coupled ligase reaction, activating hydrogencarbonate by forming carboxy phosphate which reacts with ammonia to form carbamoyl phosphate. This is Carbamoyl phosphate synthase large chain from Mesorhizobium japonicum (strain LMG 29417 / CECT 9101 / MAFF 303099) (Mesorhizobium loti (strain MAFF 303099)).